Here is a 197-residue protein sequence, read N- to C-terminus: dCTP deaminase (197 aa).

Residue 105-110 (RSSIAR) coordinates dCTP. The Proton donor/acceptor role is filled by E133. The dCTP site is built by Y166 and Q177. A disordered region spans residues 172–197 (NKYAGQKDPKPSRLAEELSLEQLRGR). Over residues 176–187 (GQKDPKPSRLAE) the composition is skewed to basic and acidic residues.

The protein belongs to the dCTP deaminase family. Homotrimer.

The catalysed reaction is dCTP + H2O + H(+) = dUTP + NH4(+). The protein operates within pyrimidine metabolism; dUMP biosynthesis; dUMP from dCTP (dUTP route): step 1/2. In terms of biological role, catalyzes the deamination of dCTP to dUTP. This Thermomicrobium roseum (strain ATCC 27502 / DSM 5159 / P-2) protein is dCTP deaminase.